Consider the following 1582-residue polypeptide: Sca1 complex scaffold protein scaA (1582 aa).

Composition is skewed to low complexity over residues 1–14 (MSSLDPSLSTTPST) and 109–131 (LSPSLSSSSSSSSSPSPPTTTST). Disordered stretches follow at residues 1-22 (MSSLDPSLSTTPSTNRRGTFSK) and 108-147 (GLSPSLSSSSSSSSSPSPPTTTSTTPPPPNNNNNSKQIKK). A TPR 1 repeat occupies 4 to 37 (LDPSLSTTPSTNRRGTFSKAKSFRRAALNLEPQG). The TPR 2 repeat unit spans residues 166 to 199 (IYTSFPESMAFDDYMDYEESLVEWKRQVEQNLGI). Positions 246 to 349 (IKETNSSVND…PSTGSLAGFV (104 aa)) are disordered. 3 stretches are compositionally biased toward polar residues: residues 249–267 (TNSSVNDDGESFSHSPTLR), 288–310 (NKDNASSQGTNHGVTLNHPNSGI), and 318–332 (SDTSTGSFEGTQLDG). A Phosphoserine; by PKB modification is found at Ser359. The tract at residues 400–600 (RSGSGFGMDH…QRQTSTWFRG (201 aa)) is gefA and gefH binding. 2 disordered regions span residues 468–493 (PKNSELSTDDGSGGGSGGSGVDGVGG) and 686–734 (SLSS…DKDK). 2 stretches are compositionally biased toward gly residues: residues 478–493 (GSGGGSGGSGVDGVGG) and 694–714 (QQQGGSGGGSGGSGSGSGSGS). The segment covering 715–726 (GLNMSGTSGSSG) has biased composition (low complexity). Residues 742–777 (MHSINNTTNVGTKEDRRQYTKILQTYEQRLQFSFRL) form a TPR 3 repeat. Residues 864-875 (GGGSGGASGGGI) are compositionally biased toward gly residues. The interval 864–978 (GGGSGGASGG…GSISTHPNTP (115 aa)) is disordered. The span at 903–928 (HIPSGSSLLSSPPNRQGSTGSFSFIG) shows a compositional bias: low complexity. Residues 940–953 (NSSSLESPRTQSQL) show a composition bias toward polar residues. Positions 960–972 (GSSPRSHSGGSIS) are enriched in low complexity. The segment at 1000–1400 (FLDLTNEKLA…SIKKEGNLYN (401 aa)) is pppA and pho2B binding. One copy of the TPR 4 repeat lies at 1080–1113 (TQEVVRLVFVYYYLGIIQERLNFFSNNVGILGFV).

As to quaternary structure, component of the Sca1 complex composed of at least gefA, gefH, scaA, phr, and the protein phosphatase 2A subunits pppA and pho2B. Phosphorylated at Ser-359 by PKB and PKBR1 is induced by chemoattractant.

It is found in the cell membrane. Functionally, component of the Sca1 complex, a regulator of cell motility, chemotaxis and signal relay. The Sca1 complex is recruited to the plasma membrane in a chemoattractant- and F-actin-dependent manner and is enriched at the leading edge of chemotaxing cells where it regulates F-actin dynamics and signal relay by controlling the activation of rasC and the downstream target of rapamycin complex 2 (TORC2)-Akt/protein kinase B (PKB) pathway. ScaA acts as a molecular scaffold, bringing together gefA, gefH and phr with PP2A. The protein is Sca1 complex scaffold protein scaA of Dictyostelium discoideum (Social amoeba).